Reading from the N-terminus, the 1202-residue chain is Caffeine-induced protein 16 (1202 aa).

A PAP-associated domain is found at 1105 to 1159; it reads NIALLLRGFFCYYGLTTQYSFDWEAYMIDISSSQLKRKSTEFKDCPFVVLDPFLK.

This Schizosaccharomyces pombe (strain 972 / ATCC 24843) (Fission yeast) protein is Caffeine-induced protein 16 (cid16).